Reading from the N-terminus, the 141-residue chain is Nucleoside diphosphate kinase (141 aa).

ATP contacts are provided by lysine 11, phenylalanine 59, arginine 87, threonine 93, arginine 104, and asparagine 114. The active-site Pros-phosphohistidine intermediate is histidine 117.

It belongs to the NDK family. In terms of assembly, homotetramer. Mg(2+) is required as a cofactor.

It is found in the cytoplasm. It catalyses the reaction a 2'-deoxyribonucleoside 5'-diphosphate + ATP = a 2'-deoxyribonucleoside 5'-triphosphate + ADP. The enzyme catalyses a ribonucleoside 5'-diphosphate + ATP = a ribonucleoside 5'-triphosphate + ADP. Functionally, major role in the synthesis of nucleoside triphosphates other than ATP. The ATP gamma phosphate is transferred to the NDP beta phosphate via a ping-pong mechanism, using a phosphorylated active-site intermediate. This Verminephrobacter eiseniae (strain EF01-2) protein is Nucleoside diphosphate kinase.